We begin with the raw amino-acid sequence, 196 residues long: dCTP deaminase, dUMP-forming (196 aa).

DCTP-binding positions include 101 to 106, Asp-119, 127 to 129, Gln-148, Tyr-162, and Gln-174; these read KSSLGR and TLE. Glu-129 serves as the catalytic Proton donor/acceptor.

It belongs to the dCTP deaminase family. As to quaternary structure, homotrimer.

The enzyme catalyses dCTP + 2 H2O = dUMP + NH4(+) + diphosphate. Its pathway is pyrimidine metabolism; dUMP biosynthesis; dUMP from dCTP: step 1/1. Functionally, bifunctional enzyme that catalyzes both the deamination of dCTP to dUTP and the hydrolysis of dUTP to dUMP without releasing the toxic dUTP intermediate. This Tropheryma whipplei (strain TW08/27) (Whipple's bacillus) protein is dCTP deaminase, dUMP-forming.